Here is a 257-residue protein sequence, read N- to C-terminus: UPF0246 protein YaaA (257 aa).

This sequence belongs to the UPF0246 family.

This Salmonella typhi protein is UPF0246 protein YaaA.